A 156-amino-acid polypeptide reads, in one-letter code: Mitochondrial intermembrane space cysteine motif-containing protein MIX17 (156 aa).

The N-terminal 21 residues, 1–21 (MARSRGSSRPISRSRPTQTRS), are a transit peptide targeting the mitochondrion. The span at 1 to 21 (MARSRGSSRPISRSRPTQTRS) shows a compositional bias: low complexity. Disordered stretches follow at residues 1–50 (MARS…GAQT) and 78–110 (AGIT…QTQT). Over residues 84–110 (FSGSGSDSAPVEQQQQNMANTSGQTQT) the composition is skewed to polar residues. Positions 115–156 (GRTCEIDARNFTRCLDENNGNFQICDYYLQQLKACQEAARQY) constitute a CHCH domain. The Cx9C motif signature appears at 118–128 (CEIDARNFTRC). 2 cysteine pairs are disulfide-bonded: cysteine 118-cysteine 149 and cysteine 128-cysteine 139.

The protein resides in the mitochondrion intermembrane space. The chain is Mitochondrial intermembrane space cysteine motif-containing protein MIX17 (MIX17) from Saccharomyces cerevisiae (strain ATCC 204508 / S288c) (Baker's yeast).